The chain runs to 162 residues: Caveolin-2 (162 aa).

The Cytoplasmic portion of the chain corresponds to 1-86 (MGLETEKADV…FEISKYVMYK (86 aa)). Tyrosine 19 is modified (phosphotyrosine; by SRC). Residues serine 20 and serine 23 each carry the phosphoserine modification. Residue tyrosine 27 is modified to Phosphotyrosine; by SRC. At serine 36 the chain carries Phosphoserine. The helical intramembrane region spans 87–107 (FLTVFLAIPLAFIAGILFATL). At 108–162 (SCLHIWILMPFVKTCLMVLPSVQTIWKSVTDVFIAPLCTSIGRSFSSVSLQLSQD) the chain is on the cytoplasmic side.

The protein belongs to the caveolin family. Monomer or homodimer. Interacts with CAV1; the interaction forms a stable heterooligomeric complex that is required for targeting to lipid rafts and for caveolae formation. Tyrosine phosphorylated forms do not form heterooligomers with the Tyr-19-phosphorylated form existing as a monomer or dimer, and the Tyr-27-form as a monomer only. Interacts (tyrosine phosphorylated form) with the SH2 domain-containing proteins, RASA1, NCK1 and SRC. Interacts (tyrosine phosphorylated form) with INSR, the interaction (Tyr-27-phosphorylated form) is increased on insulin stimulation. Interacts (Tyr-19 phosphorylated form) with MAPK1 (phosphorylated form); the interaction, promoted by insulin, leads to nuclear location and MAPK1 activation. Interacts with STAT3; the interaction is increased on insulin-induced tyrosine phosphorylation leading to STAT activation. Post-translationally, phosphorylated on serine and tyrosine residues. CAV1 promotes phosphorylation on Ser-23 which then targets the complex to the plasma membrane, lipid rafts and caveolae. Phosphorylation on Ser-36 appears to modulate mitosis in endothelial cells. Phosphorylation on both Tyr-19 and Tyr-27 is required for insulin-induced 'Ser-727' phosphorylation of STAT3 and its activation. Phosphorylation on Tyr-19 is required for insulin-induced phosphorylation of MAPK1 and DNA binding of STAT3. Tyrosine phosphorylation is induced by both EGF and insulin (By. similarity).

The protein resides in the nucleus. It localises to the cytoplasm. The protein localises to the golgi apparatus membrane. Its subcellular location is the cell membrane. It is found in the membrane. The protein resides in the caveola. Functionally, may act as a scaffolding protein within caveolar membranes. Interacts directly with G-protein alpha subunits and can functionally regulate their activity. Acts as an accessory protein in conjunction with CAV1 in targeting to lipid rafts and driving caveolae formation. The Ser-36 phosphorylated form has a role in modulating mitosis in endothelial cells. Positive regulator of cellular mitogenesis of the MAPK signaling pathway. Required for the insulin-stimulated nuclear translocation and activation of MAPK1 and STAT3, and the subsequent regulation of cell cycle progression. The polypeptide is Caveolin-2 (CAV2) (Papio anubis (Olive baboon)).